Reading from the N-terminus, the 671-residue chain is DNA ligase (671 aa).

Residues aspartate 35 to aspartate 39, serine 84 to leucine 85, and glutamate 113 each bind NAD(+). The active-site N6-AMP-lysine intermediate is lysine 115. Residues arginine 136, glutamate 170, lysine 285, and lysine 309 each contribute to the NAD(+) site. Zn(2+) contacts are provided by cysteine 403, cysteine 406, cysteine 421, and cysteine 426. The BRCT domain maps to threonine 588–leucine 671.

It belongs to the NAD-dependent DNA ligase family. LigA subfamily. It depends on Mg(2+) as a cofactor. Mn(2+) serves as cofactor.

The enzyme catalyses NAD(+) + (deoxyribonucleotide)n-3'-hydroxyl + 5'-phospho-(deoxyribonucleotide)m = (deoxyribonucleotide)n+m + AMP + beta-nicotinamide D-nucleotide.. Its function is as follows. DNA ligase that catalyzes the formation of phosphodiester linkages between 5'-phosphoryl and 3'-hydroxyl groups in double-stranded DNA using NAD as a coenzyme and as the energy source for the reaction. It is essential for DNA replication and repair of damaged DNA. This Onion yellows phytoplasma (strain OY-M) protein is DNA ligase.